The chain runs to 83 residues: Small ribosomal subunit protein bS16 (83 aa).

The protein belongs to the bacterial ribosomal protein bS16 family.

The chain is Small ribosomal subunit protein bS16 from Pseudomonas putida (strain W619).